The primary structure comprises 467 residues: Glutamate--tRNA ligase (467 aa).

Residues 10–20 carry the 'HIGH' region motif; sequence PSPTGHLHIGG. Zn(2+)-binding residues include Cys99, Cys101, Cys126, and Glu128. A 'KMSKS' region motif is present at residues 236–240; sequence RLSKR. Residue Lys239 participates in ATP binding.

This sequence belongs to the class-I aminoacyl-tRNA synthetase family. Glutamate--tRNA ligase type 1 subfamily. In terms of assembly, monomer. Requires Zn(2+) as cofactor.

It is found in the cytoplasm. The catalysed reaction is tRNA(Glu) + L-glutamate + ATP = L-glutamyl-tRNA(Glu) + AMP + diphosphate. Catalyzes the attachment of glutamate to tRNA(Glu) in a two-step reaction: glutamate is first activated by ATP to form Glu-AMP and then transferred to the acceptor end of tRNA(Glu). The polypeptide is Glutamate--tRNA ligase (Desulfosudis oleivorans (strain DSM 6200 / JCM 39069 / Hxd3) (Desulfococcus oleovorans)).